Consider the following 291-residue polypeptide: Undecaprenyl-diphosphatase 2 (291 aa).

6 helical membrane-spanning segments follow: residues 39–59, 85–105, 118–138, 198–218, 231–251, and 262–282; these read PGAA…LIYF, ARMG…GLTL, ITAT…RMAA, AARY…VFEL, PTLF…AWFM, and FVWY…VGVL.

The protein belongs to the UppP family.

The protein resides in the cell membrane. The enzyme catalyses di-trans,octa-cis-undecaprenyl diphosphate + H2O = di-trans,octa-cis-undecaprenyl phosphate + phosphate + H(+). In terms of biological role, catalyzes the dephosphorylation of undecaprenyl diphosphate (UPP). Confers resistance to bacitracin. In Streptomyces coelicolor (strain ATCC BAA-471 / A3(2) / M145), this protein is Undecaprenyl-diphosphatase 2.